The primary structure comprises 557 residues: DNA ligase (557 aa).

Residue E251 participates in ATP binding. The active-site N6-AMP-lysine intermediate is K253. The ATP site is built by R258, R273, E303, F342, R418, and K424.

Belongs to the ATP-dependent DNA ligase family. Mg(2+) serves as cofactor.

It catalyses the reaction ATP + (deoxyribonucleotide)n-3'-hydroxyl + 5'-phospho-(deoxyribonucleotide)m = (deoxyribonucleotide)n+m + AMP + diphosphate.. In terms of biological role, DNA ligase that seals nicks in double-stranded DNA during DNA replication, DNA recombination and DNA repair. The polypeptide is DNA ligase (Methanosphaera stadtmanae (strain ATCC 43021 / DSM 3091 / JCM 11832 / MCB-3)).